A 382-amino-acid polypeptide reads, in one-letter code: uncharacterized protein (382 aa).

12 consecutive transmembrane segments (helical) span residues 8–28, 45–65, 75–95, 102–122, 131–151, 157–177, 204–224, 231–251, 270–290, 291–311, 325–345, and 349–369; these read VMLL…LNTL, MVSS…GYLI, YLAS…VGFW, FIAG…LMCS, LLAA…LLVS, LLHV…PLLF, LGVN…GLMP, GMAN…GILG, VQVF…AMAP, ALFI…AWAC, ALLL…AMLM, and SDNL…LMLL.

It belongs to the major facilitator superfamily. YcaD (TC 2.A.1.26) family.

It is found in the cell inner membrane. This is an uncharacterized protein from Salmonella enteritidis PT4 (strain P125109).